The following is a 1316-amino-acid chain: DNA-directed RNA polymerase subunit beta' (1316 aa).

Residues C60, C62, C75, and C78 each contribute to the Zn(2+) site. Mg(2+) contacts are provided by D535, D537, and D539. The Zn(2+) site is built by C891, C968, C975, and C978.

It belongs to the RNA polymerase beta' chain family. The RNAP catalytic core consists of 2 alpha, 1 beta, 1 beta' and 1 omega subunit. When a sigma factor is associated with the core the holoenzyme is formed, which can initiate transcription. The cofactor is Mg(2+). Zn(2+) is required as a cofactor.

It carries out the reaction RNA(n) + a ribonucleoside 5'-triphosphate = RNA(n+1) + diphosphate. Its function is as follows. DNA-dependent RNA polymerase catalyzes the transcription of DNA into RNA using the four ribonucleoside triphosphates as substrates. This chain is DNA-directed RNA polymerase subunit beta', found in Mycobacterium tuberculosis (strain CDC 1551 / Oshkosh).